The chain runs to 258 residues: Type II restriction enzyme HincII (258 aa).

The catalysed reaction is Endonucleolytic cleavage of DNA to give specific double-stranded fragments with terminal 5'-phosphates.. Functionally, a P subtype restriction enzyme that recognizes the double-stranded sequence 5'-GTYRAC-3' and cleaves after Y-3. This chain is Type II restriction enzyme HincII (hincIIR), found in Haemophilus influenzae.